Here is a 172-residue protein sequence, read N- to C-terminus: Crossover junction endodeoxyribonuclease RuvC (172 aa).

Residues Asp-12, Glu-71, and Asp-143 contribute to the active site. Mg(2+) contacts are provided by Asp-12, Glu-71, and Asp-143.

This sequence belongs to the RuvC family. In terms of assembly, homodimer which binds Holliday junction (HJ) DNA. The HJ becomes 2-fold symmetrical on binding to RuvC with unstacked arms; it has a different conformation from HJ DNA in complex with RuvA. In the full resolvosome a probable DNA-RuvA(4)-RuvB(12)-RuvC(2) complex forms which resolves the HJ. The cofactor is Mg(2+).

The protein resides in the cytoplasm. The catalysed reaction is Endonucleolytic cleavage at a junction such as a reciprocal single-stranded crossover between two homologous DNA duplexes (Holliday junction).. Functionally, the RuvA-RuvB-RuvC complex processes Holliday junction (HJ) DNA during genetic recombination and DNA repair. Endonuclease that resolves HJ intermediates. Cleaves cruciform DNA by making single-stranded nicks across the HJ at symmetrical positions within the homologous arms, yielding a 5'-phosphate and a 3'-hydroxyl group; requires a central core of homology in the junction. The consensus cleavage sequence is 5'-(A/T)TT(C/G)-3'. Cleavage occurs on the 3'-side of the TT dinucleotide at the point of strand exchange. HJ branch migration catalyzed by RuvA-RuvB allows RuvC to scan DNA until it finds its consensus sequence, where it cleaves and resolves the cruciform DNA. The protein is Crossover junction endodeoxyribonuclease RuvC of Coxiella burnetii (strain CbuG_Q212) (Coxiella burnetii (strain Q212)).